Here is a 227-residue protein sequence, read N- to C-terminus: NAD(P)H-quinone oxidoreductase subunit K, chloroplastic (227 aa).

[4Fe-4S] cluster-binding residues include C43, C44, C108, and C139.

Belongs to the complex I 20 kDa subunit family. NDH is composed of at least 16 different subunits, 5 of which are encoded in the nucleus. [4Fe-4S] cluster serves as cofactor.

The protein localises to the plastid. It is found in the chloroplast thylakoid membrane. It catalyses the reaction a plastoquinone + NADH + (n+1) H(+)(in) = a plastoquinol + NAD(+) + n H(+)(out). The catalysed reaction is a plastoquinone + NADPH + (n+1) H(+)(in) = a plastoquinol + NADP(+) + n H(+)(out). Functionally, NDH shuttles electrons from NAD(P)H:plastoquinone, via FMN and iron-sulfur (Fe-S) centers, to quinones in the photosynthetic chain and possibly in a chloroplast respiratory chain. The immediate electron acceptor for the enzyme in this species is believed to be plastoquinone. Couples the redox reaction to proton translocation, and thus conserves the redox energy in a proton gradient. The sequence is that of NAD(P)H-quinone oxidoreductase subunit K, chloroplastic from Drimys granadensis.